Here is a 471-residue protein sequence, read N- to C-terminus: Cysteine--tRNA ligase (471 aa).

Cys29 is a Zn(2+) binding site. Positions 31-41 match the 'HIGH' region motif; that stretch reads LTVQSEPHVGH. Zn(2+)-binding residues include Cys215, His240, and Glu244. A 'KMSKS' region motif is present at residues 271–275; the sequence is KMSKS. Lys274 contributes to the ATP binding site.

The protein belongs to the class-I aminoacyl-tRNA synthetase family. Monomer. Requires Zn(2+) as cofactor.

The protein resides in the cytoplasm. It carries out the reaction tRNA(Cys) + L-cysteine + ATP = L-cysteinyl-tRNA(Cys) + AMP + diphosphate. This chain is Cysteine--tRNA ligase, found in Nocardioides sp. (strain ATCC BAA-499 / JS614).